We begin with the raw amino-acid sequence, 280 residues long: Ribosomal protein L11 methyltransferase (280 aa).

Residues threonine 131, glycine 152, aspartate 174, and asparagine 217 each coordinate S-adenosyl-L-methionine.

Belongs to the methyltransferase superfamily. PrmA family.

Its subcellular location is the cytoplasm. It catalyses the reaction L-lysyl-[protein] + 3 S-adenosyl-L-methionine = N(6),N(6),N(6)-trimethyl-L-lysyl-[protein] + 3 S-adenosyl-L-homocysteine + 3 H(+). Its function is as follows. Methylates ribosomal protein L11. This is Ribosomal protein L11 methyltransferase from Bacteroides fragilis (strain ATCC 25285 / DSM 2151 / CCUG 4856 / JCM 11019 / LMG 10263 / NCTC 9343 / Onslow / VPI 2553 / EN-2).